Consider the following 446-residue polypeptide: RUN domain-containing protein 3A (446 aa).

The interval Met-1 to Ala-298 is interaction with RAP2A. One can recognise an RUN domain in the interval Asp-52–Glu-189. At Thr-215 the chain carries Phosphothreonine. The disordered stretch occupies residues Asp-216–Pro-239. The residue at position 232 (Ser-232) is a Phosphoserine. Residues Tyr-267–Ile-322 adopt a coiled-coil conformation. The span at Pro-372–Gln-384 shows a compositional bias: polar residues. The interval Pro-372–Thr-404 is disordered. Ser-416 and Ser-419 each carry phosphoserine.

It belongs to the RUNDC3 family. Interacts with the GTP-bound form of RAP2A.

Functionally, may act as an effector of RAP2A in neuronal cells. This is RUN domain-containing protein 3A (RUNDC3A) from Pongo abelii (Sumatran orangutan).